The chain runs to 451 residues: UDP-N-acetylmuramate--L-alanine ligase (451 aa).

Gly110–Thr116 serves as a coordination point for ATP.

This sequence belongs to the MurCDEF family.

The protein localises to the cytoplasm. The catalysed reaction is UDP-N-acetyl-alpha-D-muramate + L-alanine + ATP = UDP-N-acetyl-alpha-D-muramoyl-L-alanine + ADP + phosphate + H(+). It functions in the pathway cell wall biogenesis; peptidoglycan biosynthesis. In terms of biological role, cell wall formation. The protein is UDP-N-acetylmuramate--L-alanine ligase of Francisella tularensis subsp. tularensis (strain SCHU S4 / Schu 4).